A 111-amino-acid polypeptide reads, in one-letter code: MGVRKIKEKPNVCKKGDKVRVIAGKDKGTEAVVLTALPKVNKVIVEGVNIVKKHQRPTNELPQGGIVEKEAAIHVSNVQVLDKNGVAGRVGYKFVDGKKVRYNKKSGEVLD.

It belongs to the universal ribosomal protein uL24 family. Part of the 50S ribosomal subunit.

Its function is as follows. One of two assembly initiator proteins, it binds directly to the 5'-end of the 23S rRNA, where it nucleates assembly of the 50S subunit. In terms of biological role, one of the proteins that surrounds the polypeptide exit tunnel on the outside of the subunit. In Streptococcus pneumoniae (strain Hungary19A-6), this protein is Large ribosomal subunit protein uL24.